A 111-amino-acid chain; its full sequence is Large ribosomal subunit protein uL22 (111 aa).

It belongs to the universal ribosomal protein uL22 family. As to quaternary structure, part of the 50S ribosomal subunit.

Its function is as follows. This protein binds specifically to 23S rRNA; its binding is stimulated by other ribosomal proteins, e.g. L4, L17, and L20. It is important during the early stages of 50S assembly. It makes multiple contacts with different domains of the 23S rRNA in the assembled 50S subunit and ribosome. In terms of biological role, the globular domain of the protein is located near the polypeptide exit tunnel on the outside of the subunit, while an extended beta-hairpin is found that lines the wall of the exit tunnel in the center of the 70S ribosome. The polypeptide is Large ribosomal subunit protein uL22 (Legionella pneumophila (strain Lens)).